A 251-amino-acid polypeptide reads, in one-letter code: Imidazole glycerol phosphate synthase subunit HisF (251 aa).

Catalysis depends on residues D11 and D130.

The protein belongs to the HisA/HisF family. As to quaternary structure, heterodimer of HisH and HisF.

Its subcellular location is the cytoplasm. The catalysed reaction is 5-[(5-phospho-1-deoxy-D-ribulos-1-ylimino)methylamino]-1-(5-phospho-beta-D-ribosyl)imidazole-4-carboxamide + L-glutamine = D-erythro-1-(imidazol-4-yl)glycerol 3-phosphate + 5-amino-1-(5-phospho-beta-D-ribosyl)imidazole-4-carboxamide + L-glutamate + H(+). The protein operates within amino-acid biosynthesis; L-histidine biosynthesis; L-histidine from 5-phospho-alpha-D-ribose 1-diphosphate: step 5/9. Functionally, IGPS catalyzes the conversion of PRFAR and glutamine to IGP, AICAR and glutamate. The HisF subunit catalyzes the cyclization activity that produces IGP and AICAR from PRFAR using the ammonia provided by the HisH subunit. The sequence is that of Imidazole glycerol phosphate synthase subunit HisF from Streptococcus mutans serotype c (strain ATCC 700610 / UA159).